The primary structure comprises 130 residues: Cholecystokinin (130 aa).

The first 20 residues, Met1–Gly20, serve as a signal peptide directing secretion. Residues Gln21–Arg48 constitute a propeptide that is removed on maturation. A disordered region spans residues Gln21 to Asp63. Position 112 is a sulfotyrosine (Tyr112). Phe118 bears the Phenylalanine amide mark. A propeptide spanning residues Ser122–Ser130 is cleaved from the precursor. A sulfotyrosine mark is found at Tyr126 and Tyr128.

It belongs to the gastrin/cholecystokinin family. Post-translationally, the precursor is cleaved by proteases to produce a number of active cholecystokinins. In the small intestine, the major production site is around the vitelline diverticulum.

Its subcellular location is the secreted. Functionally, this peptide hormone induces gall bladder contraction and the release of pancreatic enzymes in the gut. Its function in the brain is not clear. It also decreases food intake and regulates gastrointestinal physiological processes. The sequence is that of Cholecystokinin (CCK) from Gallus gallus (Chicken).